Consider the following 913-residue polypeptide: DNA repair endonuclease XPF (913 aa).

Residues Met1 to Asp454 form a helicase-like region. 2 leucine-zipper regions span residues Leu233–Leu254 and Leu270–Leu298. Lys289 carries the N6-acetyllysine modification. The segment covering Gly453–Ser476 has biased composition (basic and acidic residues). Disordered stretches follow at residues Gly453–Glu525 and Val638–Thr677. Positions Lys483–Glu488 match the Nuclear localization signal motif. Over residues Glu500 to Glu509 the composition is skewed to acidic residues. Residue Ser518 is modified to Phosphoserine. Basic and acidic residues predominate over residues Val638–Thr649. The interval Arg655–Phe810 is nuclease. Residues Ser680–Ala760 form the ERCC4 domain. Residues Thr834–Tyr902 are hhH2, dimerization with ERCC1.

It belongs to the XPF family. As to quaternary structure, heterodimer composed of ERCC1 and ERCC4/XPF. Interacts with SLX4/BTBD12; this interaction is direct and links the ERCC1-ERCC4/XPF complex to SLX4, which may coordinate the action of the structure-specific endonuclease during DNA repair. It depends on Mg(2+) as a cofactor.

It localises to the nucleus. The protein localises to the chromosome. Catalytic component of a structure-specific DNA repair endonuclease responsible for the 5-prime incision during DNA repair, and which is essential for nucleotide excision repair (NER) and interstrand cross-link (ICL) repair. This Cricetulus griseus (Chinese hamster) protein is DNA repair endonuclease XPF.